A 152-amino-acid polypeptide reads, in one-letter code: Deoxyuridine 5'-triphosphate nucleotidohydrolase (152 aa).

Residues 71-73 (RSG), N84, 88-90 (LID), and M98 each bind substrate.

Belongs to the dUTPase family. It depends on Mg(2+) as a cofactor.

The catalysed reaction is dUTP + H2O = dUMP + diphosphate + H(+). Its pathway is pyrimidine metabolism; dUMP biosynthesis; dUMP from dCTP (dUTP route): step 2/2. Functionally, this enzyme is involved in nucleotide metabolism: it produces dUMP, the immediate precursor of thymidine nucleotides and it decreases the intracellular concentration of dUTP so that uracil cannot be incorporated into DNA. The polypeptide is Deoxyuridine 5'-triphosphate nucleotidohydrolase (Coxiella burnetii (strain Dugway 5J108-111)).